The sequence spans 440 residues: Chromosomal replication initiator protein DnaA (440 aa).

A domain I, interacts with DnaA modulators region spans residues 1–72; it reads MTELDSLWEA…KEFAQRELGR (72 aa). The tract at residues 72 to 103 is domain II; that stretch reads RNIEPHYVLEGEFTYTNKKTEDDPTPSFEMDT. A domain III, AAA+ region region spans residues 104–320; it reads PLNPHYNFGT…GALTKVQAFA (217 aa). ATP-binding residues include glycine 148, glycine 150, lysine 151, and threonine 152. A domain IV, binds dsDNA region spans residues 321-440; sequence NLSGERITPS…ITKLKAKLRS (120 aa).

It belongs to the DnaA family. As to quaternary structure, oligomerizes as a right-handed, spiral filament on DNA at oriC.

It is found in the cytoplasm. In terms of biological role, plays an essential role in the initiation and regulation of chromosomal replication. ATP-DnaA binds to the origin of replication (oriC) to initiate formation of the DNA replication initiation complex once per cell cycle. Binds the DnaA box (a 9 base pair repeat at the origin) and separates the double-stranded (ds)DNA. Forms a right-handed helical filament on oriC DNA; dsDNA binds to the exterior of the filament while single-stranded (ss)DNA is stabiized in the filament's interior. The ATP-DnaA-oriC complex binds and stabilizes one strand of the AT-rich DNA unwinding element (DUE), permitting loading of DNA polymerase. After initiation quickly degrades to an ADP-DnaA complex that is not apt for DNA replication. Binds acidic phospholipids. The chain is Chromosomal replication initiator protein DnaA from Limosilactobacillus reuteri (strain DSM 20016) (Lactobacillus reuteri).